Here is a 155-residue protein sequence, read N- to C-terminus: Cardioactive peptide (155 aa).

The signal sequence occupies residues 1-23 (MRTSMRISLRLLALLACAICSQA). A propeptide spanning residues 24–49 (SLERENNEGTNMANHKLSGVIQWKYE) is cleaved from the precursor. Cys54 and Cys60 are joined by a disulfide. Cys60 bears the Cysteine amide mark. Positions 64 to 155 (RTYPSYPPFS…MQQLEERESK (92 aa)) are excised as a propeptide. Residues 135-155 (NKQKMLQNEKEMQQLEERESK) are disordered. The segment covering 141-155 (QNEKEMQQLEERESK) has biased composition (basic and acidic residues).

Central nervous system; most neurons exhibit coexpression with Burs.

It is found in the secreted. Cardioregulatory neurohormone that increases heart beat rate during adult wing inflation; has no effect on beat amplitude. The effect of CCAP is both ino- and chronotropic. The sequence is that of Cardioactive peptide from Drosophila melanogaster (Fruit fly).